A 740-amino-acid polypeptide reads, in one-letter code: Ribosomal protein S6 kinase alpha-3 (740 aa).

The tract at residues 1-38 (MPLAQLADPWQKMAVESPSDSAENGQQIMDEPMGEEEI) is disordered. Over residues 18–27 (PSDSAENGQQ) the composition is skewed to polar residues. One can recognise a Protein kinase 1 domain in the interval 68–327 (FELLKVLGQG…VEEIKRHSFF (260 aa)). ATP-binding positions include 74-82 (LGQGSFGKV) and Lys-100. Residue Asp-193 is the Proton acceptor of the active site. A Phosphoserine; by PDPK1 modification is found at Ser-227. One can recognise an AGC-kinase C-terminal domain in the interval 328 to 397 (STIDWNKLYR…VAITSDDESQ (70 aa)). Thr-365 bears the Phosphothreonine mark. Ser-369 and Ser-375 each carry phosphoserine. Ser-386 bears the Phosphoserine; by autocatalysis and MAPKAPK2 mark. At Ser-415 the chain carries Phosphoserine. Residues 422–679 (YEVKEDIGVG…AALVLRHPWI (258 aa)) form the Protein kinase 2 domain. Residues 428–436 (IGVGSYSVC) and Lys-451 contribute to the ATP site. Tyr-529 carries the post-translational modification Phosphotyrosine; by FGFR3. Asp-539 acts as the Proton acceptor in catalysis. Phosphoserine is present on residues Ser-556 and Ser-715.

The protein belongs to the protein kinase superfamily. AGC Ser/Thr protein kinase family. S6 kinase subfamily. Forms a complex with either MAPK1/ERK2 or MAPK3/ERK1 in quiescent cells. Transiently dissociates following mitogenic stimulation. Interacts with NFATC4, ETV1/ER81 and FGFR1. The cofactor is Mg(2+). Activated by phosphorylation at Ser-227 by PDPK1. Autophosphorylated on Ser-386, as part of the activation process. May be phosphorylated at Thr-365 and Ser-369 by MAPK1/ERK2 and MAPK3/ERK1. Can also be activated via phosphorylation at Ser-386 by MAPKAPK2. In terms of processing, N-terminal myristoylation results in an activated kinase in the absence of added growth factors. In terms of tissue distribution, expressed in many tissues, highest levels in skeletal muscle.

The protein localises to the nucleus. Its subcellular location is the cytoplasm. The enzyme catalyses L-seryl-[protein] + ATP = O-phospho-L-seryl-[protein] + ADP + H(+). It catalyses the reaction L-threonyl-[protein] + ATP = O-phospho-L-threonyl-[protein] + ADP + H(+). With respect to regulation, upon extracellular signal or mitogen stimulation, phosphorylated at Thr-577 in the C-terminal kinase domain (CTKD) by MAPK1/ERK2 and MAPK3/ERK1. The activated CTKD then autophosphorylates Ser-386, allowing binding of PDPK1, which in turn phosphorylates Ser-227 in the N-terminal kinase domain (NTDK) leading to the full activation of the protein and subsequent phosphorylation of the substrates by the NTKD. Functionally, serine/threonine-protein kinase that acts downstream of ERK (MAPK1/ERK2 and MAPK3/ERK1) signaling and mediates mitogenic and stress-induced activation of the transcription factors CREB1, ETV1/ER81 and NR4A1/NUR77, regulates translation through RPS6 and EIF4B phosphorylation, and mediates cellular proliferation, survival, and differentiation by modulating mTOR signaling and repressing pro-apoptotic function of BAD and DAPK1. In fibroblast, is required for EGF-stimulated phosphorylation of CREB1 and histone H3 at 'Ser-10', which results in the subsequent transcriptional activation of several immediate-early genes. In response to mitogenic stimulation (EGF and PMA), phosphorylates and activates NR4A1/NUR77 and ETV1/ER81 transcription factors and the cofactor CREBBP. Upon insulin-derived signal, acts indirectly on the transcription regulation of several genes by phosphorylating GSK3B at 'Ser-9' and inhibiting its activity. Phosphorylates RPS6 in response to serum or EGF via an mTOR-independent mechanism and promotes translation initiation by facilitating assembly of the preinitiation complex. In response to insulin, phosphorylates EIF4B, enhancing EIF4B affinity for the EIF3 complex and stimulating cap-dependent translation. Is involved in the mTOR nutrient-sensing pathway by directly phosphorylating TSC2 at 'Ser-1798', which potently inhibits TSC2 ability to suppress mTOR signaling, and mediates phosphorylation of RPTOR, which regulates mTORC1 activity and may promote rapamycin-sensitive signaling independently of the PI3K/AKT pathway. Mediates cell survival by phosphorylating the pro-apoptotic proteins BAD and DAPK1 and suppressing their pro-apoptotic function. Promotes the survival of hepatic stellate cells by phosphorylating CEBPB in response to the hepatotoxin carbon tetrachloride (CCl4). Is involved in cell cycle regulation by phosphorylating the CDK inhibitor CDKN1B, which promotes CDKN1B association with 14-3-3 proteins and prevents its translocation to the nucleus and inhibition of G1 progression. In LPS-stimulated dendritic cells, is involved in TLR4-induced macropinocytosis, and in myeloma cells, acts as effector of FGFR3-mediated transformation signaling, after direct phosphorylation at Tyr-529 by FGFR3. Negatively regulates EGF-induced MAPK1/3 phosphorylation via phosphorylation of SOS1. Phosphorylates SOS1 at 'Ser-1134' and 'Ser-1161' that create YWHAB and YWHAE binding sites and which contribute to the negative regulation of MAPK1/3 phosphorylation. Phosphorylates EPHA2 at 'Ser-897', the RPS6KA-EPHA2 signaling pathway controls cell migration. Acts as a regulator of osteoblast differentiation by mediating phosphorylation of ATF4, thereby promoting ATF4 transactivation activity. The polypeptide is Ribosomal protein S6 kinase alpha-3 (RPS6KA3) (Homo sapiens (Human)).